The following is a 227-amino-acid chain: UPF0758 protein Spro_4842 (227 aa).

Positions 105–227 (AMLNPRMTQH…CVSFAERGWL (123 aa)) constitute an MPN domain. H176, H178, and D189 together coordinate Zn(2+). Positions 176–189 (HNHPSGKAEPSHAD) match the JAMM motif motif.

It belongs to the UPF0758 family. YicR subfamily.

This Serratia proteamaculans (strain 568) protein is UPF0758 protein Spro_4842.